Reading from the N-terminus, the 774-residue chain is Vezatin (774 aa).

2 consecutive transmembrane segments (helical) span residues 138 to 158 (IATP…AVAA) and 163 to 183 (SISS…FTVL). Residues 430 to 457 (VRSLQLHLKALLNEVIVLEDELDKLSSC) are a coiled coil. Residues 746-757 (FGDEWDDDDDNE) show a composition bias toward acidic residues. A disordered region spans residues 746-774 (FGDEWDDDDDNEDHDHDKERNNDSSQLEG). A compositionally biased stretch (basic and acidic residues) spans 758-767 (DHDHDKERNN).

It belongs to the vezatin family. As to quaternary structure, interacts with myosin VIIa and the cadherin-catenins complex.

It localises to the cell membrane. It is found in the cell junction. The protein resides in the adherens junction. Its subcellular location is the nucleus. Plays a pivotal role in the establishment of adherens junctions and their maintenance in adult life. The chain is Vezatin (vezt) from Xenopus laevis (African clawed frog).